Reading from the N-terminus, the 186-residue chain is Dihydrofolate reductase (186 aa).

Residues 2 to 180 (RLNVVVAVSE…FTFKFCVYDV (179 aa)) form the DHFR domain. NADP(+)-binding positions include alanine 8 and 14 to 20 (GIGKGGG). Position 28–33 (28–33 (DMEFFK)) interacts with substrate. NADP(+) is bound at residue 51 to 53 (RVT). Arginine 67 serves as a coordination point for substrate. NADP(+)-binding positions include 73-75 (SST) and 112-119 (GGYRLYKE).

It belongs to the dihydrofolate reductase family. In terms of assembly, monomer.

It carries out the reaction (6S)-5,6,7,8-tetrahydrofolate + NADP(+) = 7,8-dihydrofolate + NADPH + H(+). It participates in cofactor biosynthesis; tetrahydrofolate biosynthesis; 5,6,7,8-tetrahydrofolate from 7,8-dihydrofolate: step 1/1. Its function is as follows. Key enzyme in folate metabolism. Contributes to the de novo mitochondrial thymidylate biosynthesis pathway. Catalyzes an essential reaction for de novo glycine and purine synthesis, and for DNA precursor synthesis. This Schistosoma mansoni (Blood fluke) protein is Dihydrofolate reductase.